A 272-amino-acid polypeptide reads, in one-letter code: uncharacterized protein (272 aa).

A run of 4 helical transmembrane segments spans residues 9–29 (PVGF…GSGV), 38–58 (LTSF…SFPP), 154–174 (AGEF…VLML), and 188–208 (AIAL…FNPI). Residues 209 to 272 (AAKLEEKTES…KTKKGSVHEA (64 aa)) lie on the Cytoplasmic side of the membrane.

This sequence belongs to the MotA family.

The protein localises to the cell membrane. May be involved in some transport function. This is an uncharacterized protein from Bacillus subtilis (strain 168).